Reading from the N-terminus, the 128-residue chain is Mini-ribonuclease 3 (128 aa).

Residue D17 is part of the active site.

This sequence belongs to the MrnC RNase family. In terms of assembly, homodimer. Requires Mg(2+) as cofactor.

It is found in the cytoplasm. In terms of biological role, involved in correct processing of both the 5' and 3' ends of 23S rRNA precursor. Processes 30S rRNA precursor transcript even in absence of ribonuclease 3 (Rnc); Rnc processes 30S rRNA into smaller rRNA precursors. The protein is Mini-ribonuclease 3 of Streptococcus pneumoniae (strain ATCC BAA-255 / R6).